A 415-amino-acid chain; its full sequence is MFS-type transporter FVEG_12626 (415 aa).

Residues 1–18 (MDPDTEQMRVEKPNHEQP) show a composition bias toward basic and acidic residues. The segment at 1 to 22 (MDPDTEQMRVEKPNHEQPKPNT) is disordered. Helical transmembrane passes span 27 to 47 (GGFK…VGVF), 63 to 83 (TVSW…PFVG), 93 to 113 (YLLL…SISS), 118 to 138 (YILS…YPSF), 151 to 171 (LALG…PIVV), and 178 to 198 (IGFG…LLVT). Asn-199 carries N-linked (GlcNAc...) asparagine glycosylation. 6 consecutive transmembrane segments (helical) span residues 227-247 (FILT…PITF), 264-284 (YLVS…GYIA), 290-310 (FNVS…LWLP), 318-338 (IAFA…SPAL), 354-374 (TMYA…GALI), and 386-406 (VFAG…RLYI).

The protein belongs to the major facilitator superfamily. Monocarboxylate porter (TC 2.A.1.13) family.

It localises to the membrane. Its function is as follows. MFS-type transporter; part of the Fusarium detoxification of benzoxazolinone cluster 2 (FDB2) involved in the degradation of benzoxazolinones produced by the host plant. Maize, wheat, and rye produce the 2 benzoxazinone phytoanticipins 2,4-dihy-droxy-7-methoxy-1,4-benzoxazin-3-one (DIMBOA) and 2,4-dihydroxy-1,4-benzoxazin-3-one (DIBOA) that, due to their inherent instability once released, spontaneously degrade to the more stable corresponding benzoxazolinones, 6-methoxy-2-benzoxazolinone (MBOA) and 2-benzoxazolinone (BOA), respectively. This Gibberella moniliformis (strain M3125 / FGSC 7600) (Maize ear and stalk rot fungus) protein is MFS-type transporter FVEG_12626.